The primary structure comprises 132 residues: DNA-directed RNA polymerase subunit omega (132 aa).

The tract at residues 89–109 is disordered; the sequence is HSSESESIFNTSSQEEGTSFD. A compositionally biased stretch (polar residues) spans 96 to 105; the sequence is IFNTSSQEEG.

This sequence belongs to the RNA polymerase subunit omega family. In terms of assembly, the RNAP catalytic core consists of 2 alpha, 1 beta, 1 beta' and 1 omega subunit. When a sigma factor is associated with the core the holoenzyme is formed, which can initiate transcription.

It catalyses the reaction RNA(n) + a ribonucleoside 5'-triphosphate = RNA(n+1) + diphosphate. Promotes RNA polymerase assembly. Latches the N- and C-terminal regions of the beta' subunit thereby facilitating its interaction with the beta and alpha subunits. The polypeptide is DNA-directed RNA polymerase subunit omega (Bartonella tribocorum (strain CIP 105476 / IBS 506)).